The following is a 507-amino-acid chain: Beta-glucosidase 12 (507 aa).

The signal sequence occupies residues 1–22 (MRTIYLSLLVFIIVLALNEVMA). Q50 serves as a coordination point for a beta-D-glucoside. N81 carries N-linked (GlcNAc...) asparagine glycosylation. A beta-D-glucoside is bound by residues H154 and 199–200 (NE). The active-site Proton donor is the E200. An intrachain disulfide couples C219 to C227. N-linked (GlcNAc...) asparagine glycosylation occurs at N226. Y344 serves as a coordination point for a beta-D-glucoside. The N-linked (GlcNAc...) asparagine glycan is linked to N358. A beta-D-glucoside is bound by residues E414, W459, 466-467 (EW), and F475. The active-site Nucleophile is E414.

It belongs to the glycosyl hydrolase 1 family.

It carries out the reaction Hydrolysis of terminal, non-reducing beta-D-glucosyl residues with release of beta-D-glucose.. In Arabidopsis thaliana (Mouse-ear cress), this protein is Beta-glucosidase 12.